The chain runs to 420 residues: Innexin-3 (420 aa).

The next 4 membrane-spanning stretches (helical) occupy residues 33 to 53 (ATLL…GSAI), 104 to 124 (WVPI…WIWS), 193 to 213 (MLYI…FIIL), and 278 to 298 (IYLF…INTL). The segment at 378 to 405 (NRDFHHGHSTKSTSPGLEEGHHEHLYTP) is disordered. Over residues 395 to 405 (EEGHHEHLYTP) the composition is skewed to basic and acidic residues.

It belongs to the pannexin family. As to quaternary structure, interacts with F-actin. As to expression, evenly distributed along the adjoining membranes of the two pm5 pharyngeal muscle cells.

The protein resides in the cell membrane. The protein localises to the cell junction. Its subcellular location is the gap junction. Structural component of gap junctions. Plays a role in maintaining gap junction activity to promote phayngeal muscle contraction. In Caenorhabditis elegans, this protein is Innexin-3.